The chain runs to 366 residues: Septin-1 (366 aa).

In terms of domain architecture, Septin-type G spans 22-295 (KGFDFTLMVA…EGYRARCLQS (274 aa)). The G1 motif stretch occupies residues 32–39 (GESGLGKS). GTP-binding positions include 32 to 39 (GESGLGKS), Thr-66, Gly-92, and 171 to 179 (KADALMPRE). The segment at 89–92 (DTPG) is G3 motif. A G4 motif region spans residues 170–173 (GKAD). Ser-206 carries the post-translational modification Phosphoserine. Gly-229 and Arg-244 together coordinate GTP. Ser-247 is modified (phosphoserine). Thr-250 is subject to Phosphothreonine. Ser-306 and Ser-314 each carry phosphoserine; by AURKB. The interval 347 to 366 (EKMQAQMQQSQAQGEQSDVL) is disordered. A compositionally biased stretch (low complexity) spans 349–366 (MQAQMQQSQAQGEQSDVL).

Belongs to the TRAFAC class TrmE-Era-EngA-EngB-Septin-like GTPase superfamily. Septin GTPase family. Septins polymerize into heterooligomeric protein complexes that form filaments, and can associate with cellular membranes, actin filaments and microtubules. GTPase activity is required for filament formation. Interacts with AURKB.

Its subcellular location is the cytoplasm. The protein resides in the cytoskeleton. It localises to the microtubule organizing center. The protein localises to the centrosome. It is found in the midbody. In terms of biological role, filament-forming cytoskeletal GTPase. May play a role in cytokinesis (Potential). The chain is Septin-1 from Mus musculus (Mouse).